We begin with the raw amino-acid sequence, 207 residues long: ATP synthase subunit a (207 aa).

A run of 6 helical transmembrane segments spans residues 3–23, 62–82, 88–108, 119–139, 158–178, and 180–200; these read QHVI…TIFA, LIAS…IPGL, NLNT…FEGI, FLGP…LSHL, LISV…VMLI, and LIAV…YIAG.

It belongs to the ATPase A chain family. F-type ATPases have 2 components, CF(1) - the catalytic core - and CF(0) - the membrane proton channel. CF(1) has five subunits: alpha(3), beta(3), gamma(1), delta(1), epsilon(1). CF(0) has three main subunits: a(1), b(2) and c(9-12). The alpha and beta chains form an alternating ring which encloses part of the gamma chain. CF(1) is attached to CF(0) by a central stalk formed by the gamma and epsilon chains, while a peripheral stalk is formed by the delta and b chains.

It is found in the cell inner membrane. Functionally, key component of the proton channel; it plays a direct role in the translocation of protons across the membrane. In Sulfurihydrogenibium sp. (strain YO3AOP1), this protein is ATP synthase subunit a.